The sequence spans 79 residues: Cell division protein ZapB (79 aa).

Residues Glu-4–Glu-78 adopt a coiled-coil conformation.

This sequence belongs to the ZapB family. As to quaternary structure, homodimer. The ends of the coiled-coil dimer bind to each other, forming polymers. Interacts with FtsZ.

The protein localises to the cytoplasm. Non-essential, abundant cell division factor that is required for proper Z-ring formation. It is recruited early to the divisome by direct interaction with FtsZ, stimulating Z-ring assembly and thereby promoting cell division earlier in the cell cycle. Its recruitment to the Z-ring requires functional FtsA or ZipA. This Serratia proteamaculans (strain 568) protein is Cell division protein ZapB.